The sequence spans 233 residues: Orotidine 5'-phosphate decarboxylase (233 aa).

Residues Asp11, Lys34, 61-70 (DLKLHDIPNT), Thr117, Arg179, Gln189, Gly209, and Arg210 contribute to the substrate site. The active-site Proton donor is Lys63.

Belongs to the OMP decarboxylase family. Type 1 subfamily. As to quaternary structure, homodimer.

The enzyme catalyses orotidine 5'-phosphate + H(+) = UMP + CO2. The protein operates within pyrimidine metabolism; UMP biosynthesis via de novo pathway; UMP from orotate: step 2/2. Its function is as follows. Catalyzes the decarboxylation of orotidine 5'-monophosphate (OMP) to uridine 5'-monophosphate (UMP). The chain is Orotidine 5'-phosphate decarboxylase from Streptococcus agalactiae serotype V (strain ATCC BAA-611 / 2603 V/R).